Consider the following 489-residue polypeptide: DNA-directed RNA polymerase subunit beta' C-terminal section (489 aa).

Residues Asp-208, Asp-210, and Asp-212 each coordinate Mg(2+).

Belongs to the RNA polymerase beta' chain family. RpoC1 subfamily. As to quaternary structure, in plastids the minimal PEP RNA polymerase catalytic core is composed of four subunits: alpha, beta, beta', and beta''. When a (nuclear-encoded) sigma factor is associated with the core the holoenzyme is formed, which can initiate transcription. Requires Mg(2+) as cofactor.

The protein resides in the plastid. It is found in the chloroplast. The enzyme catalyses RNA(n) + a ribonucleoside 5'-triphosphate = RNA(n+1) + diphosphate. Its function is as follows. DNA-dependent RNA polymerase catalyzes the transcription of DNA into RNA using the four ribonucleoside triphosphates as substrates. This Chlamydomonas reinhardtii (Chlamydomonas smithii) protein is DNA-directed RNA polymerase subunit beta' C-terminal section (rpoC1B).